We begin with the raw amino-acid sequence, 516 residues long: L-amino-acid oxidase (516 aa).

The N-terminal stretch at 1–18 is a signal peptide; the sequence is MNVFFMFSLLFLAALGSC. Cys-28 and Cys-189 are oxidised to a cystine. FAD contacts are provided by residues 61–62, 81–82, Arg-89, and 103–106; these read MS, EA, and GPMR. Positions 106 and 239 each coordinate substrate. Val-279 provides a ligand contact to FAD. Cys-349 and Cys-430 are disulfide-bonded. Asn-379 is a glycosylation site (N-linked (GlcNAc...) asparagine). Tyr-390 contacts substrate. Residues Glu-475 and 482–487 each bind FAD; that span reads GWIDST. Substrate is bound at residue 482 to 483; that stretch reads GW.

Belongs to the flavin monoamine oxidase family. FIG1 subfamily. As to quaternary structure, homodimer; non-covalently linked. The cofactor is FAD. In terms of processing, N-glycosylated. In terms of tissue distribution, expressed by the venom gland.

It localises to the secreted. It catalyses the reaction an L-alpha-amino acid + O2 + H2O = a 2-oxocarboxylate + H2O2 + NH4(+). Functionally, catalyzes an oxidative deamination of predominantly hydrophobic and aromatic L-amino acids, thus producing hydrogen peroxide that may contribute to the diverse toxic effects of this enzyme. Exhibits diverse biological activities, such as hemorrhage, hemolysis, edema, apoptosis of vascular endothelial cells or tumor cell lines, antibacterial and antiparasitic activities, as well as regulation of platelet aggregation. Effects of snake L-amino oxidases on platelets are controversial, since they either induce aggregation or inhibit agonist-induced aggregation. These different effects are probably due to different experimental conditions. This chain is L-amino-acid oxidase, found in Sistrurus catenatus edwardsii (Desert massasauga).